Here is a 76-residue protein sequence, read N- to C-terminus: uncharacterized protein (76 aa).

The next 3 helical transmembrane spans lie at 2 to 22, 28 to 48, and 56 to 76; these read LKVA…YSLF, LLIV…VEAI, and EYLL…KFII.

Its subcellular location is the cell membrane. This is an uncharacterized protein from Bacillus subtilis (strain 168).